The primary structure comprises 463 residues: A-type ATP synthase subunit B (463 aa).

Belongs to the ATPase alpha/beta chains family. In terms of assembly, has multiple subunits with at least A(3), B(3), C, D, E, F, H, I and proteolipid K(x).

The protein localises to the cell membrane. In terms of biological role, component of the A-type ATP synthase that produces ATP from ADP in the presence of a proton gradient across the membrane. The B chain is a regulatory subunit. The chain is A-type ATP synthase subunit B from Desulfurococcus sp. (strain SY).